The primary structure comprises 829 residues: MSKLDLEEVNSMQRGKVHGPFLVENMVCQKNHMLTSKGVFLGSDPLKYAMPLMLLQMSVIIITSRLLYRLLKPLKQGMISAQVLAGIILGPSLFGQSSAYMQMFLPISGKITLQTLSNLGFFIHLFLLGLRIDASIIRKAGSKAILIGTASYALPFSLGNLTVLFLKNTYNLPPDVVHCISTVISLNAMTSFPVTTTVLAELNILNSDLGRLATNCSIVCEAFSWIVALVFRMFLRDGTLASVWSFVWVTALILVIFFVCRPAIIWLTERRSISIDKAGEIPFFPIIMVLLTISLTSEVLGVHAAFGAFWLGVSLPDGPPLGTGLTTKLEMFATSLMLPCFISISGLQTNFFIIGESHVKIIEAVILITYGCKFLGTAAASAYCNIQIGDAFSLALLMCCQGVIEIYTCVMWKDEKVLNTECFNLLIITLLLVTGISRFLVVCLYDPSKRYRSKSKRTILDTRQRNLQFRLLLCVYNVENVPSMVNLLEASYPSRFSPISVFTLHLVELKGRAHAVLVPHHQMNKLDPNTVQSTHIVNGFQRFEQQNQGTLMAQHFTAAAPFSSINDDICTLALDKKATLIVIPFHKQYAIDGTVDHVNPSIRNINLNVLEKAPCSVGIFIDRGETEGRRSVLMSYTWRNVAVIFIEGRDDAEALAFSMRIAEHPEVSVTMIHFRHKSSLQQNHVVDVESELAESYLINDFKNFAMSKPKISYREEIVRDGVETTQVISSLGDSFDLVVVGRDHDLESSVLYGLTDWSECPELGVIGDMFASSDFHFSVLVIHQQEGDSLAMDNSYKLPASPHRVGDPRVHPRFSVEEGFTSVDLHSNR.

A run of 12 helical transmembrane segments spans residues 48–68, 77–97, 117–137, 145–165, 180–200, 215–235, 240–260, 281–301, 329–349, 361–383, 392–412, and 425–445; these read YAMPLMLLQMSVIIITSRLLY, GMISAQVLAGIILGPSLFGQS, SNLGFFIHLFLLGLRIDASII, ILIGTASYALPFSLGNLTVLF, ISTVISLNAMTSFPVTTTVLA, NCSIVCEAFSWIVALVFRMFL, LASVWSFVWVTALILVIFFVC, IPFFPIIMVLLTISLTSEVLG, LEMFATSLMLPCFISISGLQT, IIEAVILITYGCKFLGTAAASAY, FSLALLMCCQGVIEIYTCVMW, and LLIITLLLVTGISRFLVVCLY. Ser-827 is subject to Phosphoserine.

This sequence belongs to the monovalent cation:proton antiporter 2 (CPA2) transporter (TC 2.A.37) family. CHX (TC 2.A.37.4) subfamily. Preferentially expressed in pollen but also detected in vegetative tissues like leaf trichomes and root vascular tissues.

Its subcellular location is the membrane. May operate as a cation/H(+) antiporter. The chain is Cation/H(+) antiporter 14 (CHX14) from Arabidopsis thaliana (Mouse-ear cress).